A 224-amino-acid polypeptide reads, in one-letter code: Na(+)-translocating NADH-quinone reductase subunit D (224 aa).

The next 5 membrane-spanning stretches (helical) occupy residues 43–63 (TVMAIALTLVTGFSNLFISMI), 67–87 (IPSSIRMIVQMVIIASLVIVV), 104–124 (VFVGLIITNCIVMGRAEAFAM), 132–152 (FFDGIGNGLGYSAMLLVLGFV), and 179–199 (NGLLLLPPSAFFLIGLIIWAL).

It belongs to the NqrDE/RnfAE family. Composed of six subunits; NqrA, NqrB, NqrC, NqrD, NqrE and NqrF.

It is found in the cell inner membrane. It carries out the reaction a ubiquinone + n Na(+)(in) + NADH + H(+) = a ubiquinol + n Na(+)(out) + NAD(+). NQR complex catalyzes the reduction of ubiquinone-1 to ubiquinol by two successive reactions, coupled with the transport of Na(+) ions from the cytoplasm to the periplasm. NqrA to NqrE are probably involved in the second step, the conversion of ubisemiquinone to ubiquinol. This is Na(+)-translocating NADH-quinone reductase subunit D from Pseudomonas aeruginosa (strain LESB58).